The chain runs to 74 residues: Kappa-scoloptoxin(07)-Ssm2d (74 aa).

An N-terminal signal peptide occupies residues 1 to 19 (MLVFYALLFVTVFSNTVMG). A propeptide spanning residues 20-41 (ATIDKPIPKPILREAIEEIEVN) is cleaved from the precursor.

The protein belongs to the scoloptoxin-07 family. Contains 3 disulfide bonds. In terms of tissue distribution, expressed by the venom gland.

The protein localises to the secreted. Inhibits voltage-gated potassium channels. The sequence is that of Kappa-scoloptoxin(07)-Ssm2d from Scolopendra mutilans (Chinese red-headed centipede).